We begin with the raw amino-acid sequence, 183 residues long: MKLEESLKKCPVIKRGEYNYFVHPITDGIPLVEPSLLREVACRILKIVDFSEVDKIVTAEAMGIHLATTLSLYTDIPFVIIRKRSYGLEGEIPVFQKTGYSKGQLYVNGIKEGDKVVIVDDVISTGGTMIAIIEALKRAGAEIKDIVCVIERGKGREIVEKKTGYKIKTLVKIDVVDGKVVIK.

This sequence belongs to the purine/pyrimidine phosphoribosyltransferase family. Archaeal HPRT subfamily. As to quaternary structure, homodimer.

It localises to the cytoplasm. The enzyme catalyses IMP + diphosphate = hypoxanthine + 5-phospho-alpha-D-ribose 1-diphosphate. The catalysed reaction is GMP + diphosphate = guanine + 5-phospho-alpha-D-ribose 1-diphosphate. Its pathway is purine metabolism; IMP biosynthesis via salvage pathway; IMP from hypoxanthine: step 1/1. Its function is as follows. Catalyzes a salvage reaction resulting in the formation of IMP that is energically less costly than de novo synthesis. In Methanocaldococcus infernus (strain DSM 11812 / JCM 15783 / ME), this protein is Hypoxanthine/guanine phosphoribosyltransferase.